Consider the following 742-residue polypeptide: MEQTYQYAWIIPFLPLPVPMLIGLGLLLFPTATKSLRRMWSFQSVLLLSIVMIFSMNLSIQQINSSYVYQYVWSWIINNDFSLEFGYLIDPLTSIMLILITTVGIMVLIYSDNYMSHDHGYLRFFAYMSFFSTSMLGLVTSSNLIQIYIFWELVGICSYLLIGFWFTRPVAAKACQKAFVTNRVGDFGLLLGILGFYWITGSFEFRDLFQIFNNLISNNEVNFLFVTLCAILLFAGAIAKSAQFPLHVWLPDAMEGPTPISALIHAATMVAAGIFLVARLMPLFIVIPHIMNFISLIGIITVFLGATLALAQKDIKRGLAYSTMSQLGYMMLALGMGSYRSALFHLITHAYSKALLFLGSGSVIHSMETLVGYCPKKSQNMVLMGGLTKHLPITKNSFLLGTLSLCGIPPLACFWSKDEILNDSWLYSPIFGIIAWSTAGLTAFYMCRIYLLTFEGHLNVHFQNYSGKRNTPFYSISLWGKEGSKISNKNFSLVTLLKMKKNPRPSFFSNNKVYKIDENVRNMIQPFLSIPHFGNTKTYSYPYESDNTMLFPILILILFTLFVGFLGIPFNQDVDILSKWLNPSINLLHQNSNNSIDWYEFSKDAFFSVSIASFGIFIAFFLYKPVYSSFQNLEFLNTFVKMGPNRIFYDKIKNSIYDWSYNRGYIDAFYGRFLTAGIRKLANFAHFFDRRIIDAIPNGVGLMSFFGAEVIKSVGGGRISSYLFFYFSYVAIFLLIYYFFNV.

16 helical membrane passes run 9–29 (WIIP…LLLF), 40–60 (WSFQ…NLSI), 89–109 (IDPL…MVLI), 125–145 (FAYM…SNLI), 147–167 (IYIF…FWFT), 185–205 (GDFG…SFEF), 219–239 (NEVN…GAIA), 258–278 (TPIS…FLVA), 283–303 (LFIV…ITVF), 327–347 (LGYM…FHLI), 354–374 (ALLF…VGYC), 396–416 (NSFL…CFWS), 425–445 (WLYS…TAFY), 550–570 (LFPI…GIPF), 606–626 (FFSV…YKPV), and 722–742 (YLFF…FFNV).

This sequence belongs to the complex I subunit 5 family. NDH is composed of at least 16 different subunits, 5 of which are encoded in the nucleus.

It localises to the plastid. The protein resides in the chloroplast thylakoid membrane. It carries out the reaction a plastoquinone + NADH + (n+1) H(+)(in) = a plastoquinol + NAD(+) + n H(+)(out). It catalyses the reaction a plastoquinone + NADPH + (n+1) H(+)(in) = a plastoquinol + NADP(+) + n H(+)(out). Its function is as follows. NDH shuttles electrons from NAD(P)H:plastoquinone, via FMN and iron-sulfur (Fe-S) centers, to quinones in the photosynthetic chain and possibly in a chloroplast respiratory chain. The immediate electron acceptor for the enzyme in this species is believed to be plastoquinone. Couples the redox reaction to proton translocation, and thus conserves the redox energy in a proton gradient. The sequence is that of NAD(P)H-quinone oxidoreductase subunit 5, chloroplastic (ndhF) from Lactuca sativa (Garden lettuce).